Consider the following 458-residue polypeptide: Exodeoxyribonuclease 7 large subunit (458 aa).

Belongs to the XseA family. As to quaternary structure, heterooligomer composed of large and small subunits.

The protein localises to the cytoplasm. The enzyme catalyses Exonucleolytic cleavage in either 5'- to 3'- or 3'- to 5'-direction to yield nucleoside 5'-phosphates.. Its function is as follows. Bidirectionally degrades single-stranded DNA into large acid-insoluble oligonucleotides, which are then degraded further into small acid-soluble oligonucleotides. The protein is Exodeoxyribonuclease 7 large subunit of Stutzerimonas stutzeri (strain A1501) (Pseudomonas stutzeri).